The sequence spans 122 residues: Urease subunit beta (122 aa).

The interval 102–122 (DGGTAVAGEPRPGIAAERDHQ) is disordered.

The protein belongs to the urease beta subunit family. In terms of assembly, heterotrimer of UreA (gamma), UreB (beta) and UreC (alpha) subunits. Three heterotrimers associate to form the active enzyme.

The protein localises to the cytoplasm. It catalyses the reaction urea + 2 H2O + H(+) = hydrogencarbonate + 2 NH4(+). The protein operates within nitrogen metabolism; urea degradation; CO(2) and NH(3) from urea (urease route): step 1/1. This Paenarthrobacter aurescens (strain TC1) protein is Urease subunit beta.